A 662-amino-acid chain; its full sequence is MSFSDSGSSSYGGEYKNFRQITRERLLCEMLRPERNGSSKLTWKVLVMDKFTVKIMSSACKMSEITQEGISLVEVITKHRQPMTAMEVIYFIQPTEENVTAFLSDMTGKSPLYKKAFVFFSSPVSRSLVNLIKKDMRAMKRIGGLKEMNLEYISMDIQGFVTNNENALEELFCDDENHQRADACLNVVAKRIATVLASLKEYPFVRYRGAKALDATTMTTYRELIPTKLAASVWNCLARYKQTIEDFPQTETCELLILDRSIDQIAPLIHEWTYDAMCHDLLNMEGNKYTHEVPSKTGDKPEKKEVLLDEEDSIWVELRDAHIADASERLHEKMTNFVSKNKAAQLKHSSKDFGDLSSKDLQKMVHALPQYSEQIDKLSLHVEIARTINRTIMEQGLRDLGQLEQDLVFGDAGRKDVIKFLSTNHIISHESKLRLIMIVAAIYPKKFEGEKGRKMMELAKLSGDDVVAVNNMRLLGPVHTECKKSTTGSFPLKFDVLKTKRAARRDRVGETQTWQLSRFYPIVEELVEKLSKGHLPKQDYPCMNEPKPTFYSGSLSPSASPVLPHSRRTPTWARRHLSDDGYFSDSVLGRASSGFKRKGQRIFVFIVGGATRSELRVCHKLTEKLDREVILGSSSFLDPLTFLTKMKQLNEEEEISLDDIVI.

Belongs to the STXBP/unc-18/SEC1 family.

In terms of biological role, involved in the vesicle trafficking. Binds syntaxins. In Arabidopsis thaliana (Mouse-ear cress), this protein is Protein transport Sec1b (SEC1B).